Reading from the N-terminus, the 309-residue chain is Homoserine O-succinyltransferase (309 aa).

Cysteine 142 (acyl-thioester intermediate) is an active-site residue. Substrate-binding residues include lysine 163 and serine 192. The active-site Proton acceptor is the histidine 235. Glutamate 237 is a catalytic residue. Arginine 249 lines the substrate pocket.

This sequence belongs to the MetA family.

It localises to the cytoplasm. The catalysed reaction is L-homoserine + succinyl-CoA = O-succinyl-L-homoserine + CoA. The protein operates within amino-acid biosynthesis; L-methionine biosynthesis via de novo pathway; O-succinyl-L-homoserine from L-homoserine: step 1/1. Transfers a succinyl group from succinyl-CoA to L-homoserine, forming succinyl-L-homoserine. This Proteus mirabilis (strain HI4320) protein is Homoserine O-succinyltransferase.